Reading from the N-terminus, the 146-residue chain is Large ribosomal subunit protein uL15 (146 aa).

Basic and acidic residues predominate over residues 1-13 (MKLHELKPAEGSR). The interval 1–48 (MKLHELKPAEGSRKVRNRVGRGIGSGNGKTAGKGHKGQNARSGGGVRL) is disordered. Residues 21–31 (RGIGSGNGKTA) show a composition bias toward gly residues.

Belongs to the universal ribosomal protein uL15 family. As to quaternary structure, part of the 50S ribosomal subunit.

In terms of biological role, binds to the 23S rRNA. This Bacillus cytotoxicus (strain DSM 22905 / CIP 110041 / 391-98 / NVH 391-98) protein is Large ribosomal subunit protein uL15.